Here is a 217-residue protein sequence, read N- to C-terminus: Thiamine-phosphate synthase (217 aa).

Residues 41–45 (QYRDK) and asparagine 76 contribute to the 4-amino-2-methyl-5-(diphosphooxymethyl)pyrimidine site. 2 residues coordinate Mg(2+): aspartate 77 and aspartate 96. Serine 115 is a 4-amino-2-methyl-5-(diphosphooxymethyl)pyrimidine binding site. 142–144 (SPS) contacts 2-[(2R,5Z)-2-carboxy-4-methylthiazol-5(2H)-ylidene]ethyl phosphate. Lysine 145 serves as a coordination point for 4-amino-2-methyl-5-(diphosphooxymethyl)pyrimidine. Residues glycine 172 and 192-193 (IS) contribute to the 2-[(2R,5Z)-2-carboxy-4-methylthiazol-5(2H)-ylidene]ethyl phosphate site.

It belongs to the thiamine-phosphate synthase family. Requires Mg(2+) as cofactor.

It carries out the reaction 2-[(2R,5Z)-2-carboxy-4-methylthiazol-5(2H)-ylidene]ethyl phosphate + 4-amino-2-methyl-5-(diphosphooxymethyl)pyrimidine + 2 H(+) = thiamine phosphate + CO2 + diphosphate. The catalysed reaction is 2-(2-carboxy-4-methylthiazol-5-yl)ethyl phosphate + 4-amino-2-methyl-5-(diphosphooxymethyl)pyrimidine + 2 H(+) = thiamine phosphate + CO2 + diphosphate. It catalyses the reaction 4-methyl-5-(2-phosphooxyethyl)-thiazole + 4-amino-2-methyl-5-(diphosphooxymethyl)pyrimidine + H(+) = thiamine phosphate + diphosphate. The protein operates within cofactor biosynthesis; thiamine diphosphate biosynthesis; thiamine phosphate from 4-amino-2-methyl-5-diphosphomethylpyrimidine and 4-methyl-5-(2-phosphoethyl)-thiazole: step 1/1. Its function is as follows. Condenses 4-methyl-5-(beta-hydroxyethyl)thiazole monophosphate (THZ-P) and 2-methyl-4-amino-5-hydroxymethyl pyrimidine pyrophosphate (HMP-PP) to form thiamine monophosphate (TMP). This is Thiamine-phosphate synthase from Acidithiobacillus ferrooxidans (strain ATCC 23270 / DSM 14882 / CIP 104768 / NCIMB 8455) (Ferrobacillus ferrooxidans (strain ATCC 23270)).